A 127-amino-acid chain; its full sequence is Calcitonin gene-related peptide 2 (127 aa).

A signal peptide spans 1–25; sequence MGFRKFSPFLALSILVLYQAGSLQA. Positions 26–79 are excised as a propeptide; it reads APFRSALESSPDPATLSKEDARLLLAALVQDYVQMKASELKQEQETQGSSSAAQ. The cysteines at positions 83 and 88 are disulfide-linked. The residue at position 118 (Phe118) is a Phenylalanine amide. Residues 124–127 constitute a propeptide that is removed on maturation; sequence DLQA.

It belongs to the calcitonin family. As to expression, expressed in spinal cord, pituitary and thalamus.

It localises to the secreted. In terms of biological role, CALCB/CGRP2 is a peptide hormone that induces vasodilation mediated by the CALCRL-RAMP1 receptor complex. Dilates a variety of vessels including the coronary, cerebral and systemic vasculature. Its abundance in the CNS also points toward a neurotransmitter or neuromodulator role. In Homo sapiens (Human), this protein is Calcitonin gene-related peptide 2.